Here is a 290-residue protein sequence, read N- to C-terminus: Thymidylate synthase (290 aa).

DUMP-binding positions include arginine 27 and 152–153; that span reads RR. Residue cysteine 172 is the Nucleophile of the active site. Residues 192–195, asparagine 203, and 233–235 each bind dUMP; these read RSAD and HVY. Position 195 (aspartate 195) interacts with (6R)-5,10-methylene-5,6,7,8-tetrahydrofolate. Alanine 289 is a (6R)-5,10-methylene-5,6,7,8-tetrahydrofolate binding site.

Belongs to the thymidylate synthase family. Homodimer.

The enzyme catalyses dUMP + (6R)-5,10-methylene-5,6,7,8-tetrahydrofolate = 7,8-dihydrofolate + dTMP. It participates in pyrimidine metabolism; dTTP biosynthesis. The polypeptide is Thymidylate synthase (TS) (Ateles).